The sequence spans 168 residues: D-aminoacyl-tRNA deacylase 2 (168 aa).

The short motif at 160–161 is the Gly-transPro motif, allows the protein to recognize chirality of D-amino acids element; that stretch reads GP.

This sequence belongs to the DTD family. As to quaternary structure, homodimer.

It localises to the cytoplasm. It carries out the reaction a D-aminoacyl-tRNA + H2O = a tRNA + a D-alpha-amino acid + H(+). The enzyme catalyses glycyl-tRNA(Ala) + H2O = tRNA(Ala) + glycine + H(+). It catalyses the reaction D-tyrosyl-tRNA(Tyr) + H2O = D-tyrosine + tRNA(Tyr). The catalysed reaction is L-alanyl-tRNA(Thr) + H2O = tRNA(Thr) + L-alanine + H(+). Functionally, deacylates mischarged D-aminoacyl-tRNAs. Also deacylates mischarged glycyl-tRNA(Ala), protecting cells against glycine mischarging by AlaRS. Probably acts by rejecting L-amino acids from its binding site rather than specific recognition of D-amino acids. Catalyzes the hydrolysis of D-tyrosyl-tRNA(Tyr), has no activity on correctly charged L-tyrosyl-tRNA(Tyr). By recycling D-aminoacyl-tRNA to D-amino acids and free tRNA molecules, this enzyme counteracts the toxicity associated with the formation of D-aminoacyl-tRNA entities in vivo and helps enforce protein L-homochirality. In contrast to DTD1, deacylates L-Ala mischarged on tRNA(Thr)(G4.U69) by alanine-tRNA ligase AARS. Can deacylate L-Ala due to a relaxed specificity for substrate chirality caused by the trans conformation of the Gly-Pro motif in the active site. Also hydrolyzes correctly charged, achiral, glycyl-tRNA(Gly) in vitro, although in vivo EEF1A1/EF-Tu may protect cognate achiral glycyl-tRNA(Gly) from DTD2-mediated deacetylation. This Homo sapiens (Human) protein is D-aminoacyl-tRNA deacylase 2 (DTD2).